Consider the following 3393-residue polypeptide: Genome polyprotein (3393 aa).

The Cytoplasmic segment spans residues 1–91; it reads MVNPKGVNVM…GVSRRKKRRS (91 aa). The tract at residues 28 to 60 is hydrophobic; homodimerization of capsid protein C; that stretch reads VSRGLRGFVLFVLTQLFMGRKLTPNVRRLWKSS. A propeptide spans 91–108 (ER anchor for the capsid protein C, removed in mature form by serine protease NS3); the sequence is SATTSGTVFMAMLGLTLA. The helical transmembrane segment at 92–112 threads the bilayer; it reads ATTSGTVFMAMLGLTLAASVA. The Extracellular segment spans residues 113–231; sequence RHAHHTLINI…FETQVQKVEK (119 aa). N-linked (GlcNAc...) asparagine; by host glycans are attached at residues Asn-121 and Asn-137. The helical transmembrane segment at 232–252 threads the bilayer; the sequence is WIIRNPTYAIAAILMSWYIGN. The Cytoplasmic segment spans residues 253 to 257; that stretch reads SLKQR. The helical transmembrane segment at 258–272 threads the bilayer; sequence VVLLLLTLALGPAYA. Over 273-713 the chain is Extracellular; it reads THCVGIPKRD…IHTVFGTAFH (441 aa). 5 cysteine pairs are disulfide-bonded: Cys-275–Cys-302, Cys-346–Cys-377, Cys-364–Cys-388, Cys-453–Cys-553, and Cys-570–Cys-600. The interval 370–383 is fusion peptide; sequence DRGWGNGCGLFGKG. Residues 714-734 form a helical membrane-spanning segment; sequence GIFGGLSWMTRILIGVLLVWL. Residues 735–745 lie on the Cytoplasmic side of the membrane; the sequence is GLNSRNGTATT. Residues 746 to 763 traverse the membrane as a helical segment; that stretch reads LMMLTGFIILFLSLGVGA. Topologically, residues 764-1112 are extracellular; the sequence is EVGCSVNWGQ…TPEKHLVRSW (349 aa). 8 disulfide bridges follow: Cys-767–Cys-778, Cys-818–Cys-905, Cys-941–Cys-986, Cys-1043–Cys-1092, Cys-1054–Cys-1075, Cys-1054–Cys-1076, Cys-1075–Cys-1079, and Cys-1076–Cys-1079. Asn-893 and Asn-970 each carry an N-linked (GlcNAc...) asparagine; by host glycan. The helical transmembrane segment at 1113 to 1133 threads the bilayer; sequence VTAGDSYPAWSIGLVAMFLFV. Residues 1134–1186 lie on the Cytoplasmic side of the membrane; sequence DIMARSRPTRKMMIGGTMLLLAIMIMGELSYLDLLRYIIVVGEHFIERENGGD. The chain crosses the membrane as a helical span at residues 1187–1207; the sequence is VAYMAIMAASHLRPGLMAMVF. At 1208–1283 the chain is on the lumenal side; the sequence is AKSMWSPKQR…PVSMPVIRKA (76 aa). The helical transmembrane segment at 1284-1304 threads the bilayer; the sequence is SMIIGTGGLLLSLWKGGGSSM. At 1305-1341 the chain is on the cytoplasmic side; it reads RKGLPLFAASAARVLGLTKAHLSVLFILLITKNGKRT. Residues 1342–1362 traverse the membrane as a helical segment; sequence WPISECLAAVGIFGAAFGTMF. The Lumenal segment spans residues 1363 to 1365; the sequence is SED. A helical membrane pass occupies residues 1366–1386; sequence ETLLGPLALVGVVLIVYTMFT. At 1387–1438 the chain is on the cytoplasmic side; it reads QSDGLELVKAADISWSDEAVVSGEARRFDVALNDSGEFKLLDEPPVSWLNVS. Positions 1393–1432 are interacts with and activates NS3 protease; sequence LVKAADISWSDEAVVSGEARRFDVALNDSGEFKLLDEPPV. The segment at residues 1439–1459 is an intramembrane region (helical); the sequence is FLVVAIVASSLHPIALVVTLV. The Cytoplasmic segment spans residues 1460 to 2137; the sequence is AWTYWRTEKR…KLALQQAPEA (678 aa). The region spanning 1470–1649 is the Peptidase S7 domain; the sequence is SGVLWDVPLA…QPGSVAEVET (180 aa). Catalysis depends on charge relay system; for serine protease NS3 activity residues His-1521, Asp-1545, and Ser-1606. Positions 1653-1809 constitute a Helicase ATP-binding domain; sequence DKMLRKGEFT…ESNAEIEDVK (157 aa). Residues 1657–1660 are important for RNA-binding; the sequence is RKGE. 1666 to 1673 contributes to the ATP binding site; it reads YHPGAGKT. The DEAH box motif lies at 1757-1760; sequence DEAH. One can recognise a Helicase C-terminal domain in the interval 1804–1984; it reads EIEDVKKEIP…VAPLYEEEAS (181 aa). The helical transmembrane segment at 2138 to 2158 threads the bilayer; that stretch reads VSTLLLLGMMAICTLGLVILL. Residues 2159–2168 lie on the Lumenal side of the membrane; the sequence is MKPKATDKMS. An intramembrane region (helical) is located at residues 2169–2184; that stretch reads MAMVTMAITGYLLKLG. Residue Gly-2185 is a topological domain, lumenal. A helical transmembrane segment spans residues 2186-2206; it reads MTHAQVGGILLVFFIMMVVII. At 2207–2221 the chain is on the cytoplasmic side; it reads PESGTQRSINDNKLA. A helical membrane pass occupies residues 2222 to 2236; sequence YVIILVGLVIGGVAC. At 2237-2275 the chain is on the lumenal side; the sequence is NELGWLEKTKADLFGNNMTHAQTVVLPTINWNWLDFRPG. Residues 2276-2296 constitute an intramembrane region (helical); the sequence is AAWSLYVGMATFLTPVFVHWI. Topologically, residues 2297 to 2344 are lumenal; that stretch reads KNEYGNASLTGITPTAGILGALNQGVPFVKLNTSVGVLLLSVWNNFTT. A helical membrane pass occupies residues 2345–2365; it reads SSMLAAMVMLACHCLFVLPGV. The Cytoplasmic segment spans residues 2366–2408; it reads RAQCLREAQIRVFHGVAKNPMVDGNPTVDLEKENDMPDLYEKK. A helical transmembrane segment spans residues 2409 to 2429; it reads LALVALGMAAVLNAAMVRTAL. The Lumenal portion of the chain corresponds to 2430 to 2457; sequence TTAEMVVLGSAAVGPLLEGNTSAFWNGP. A helical membrane pass occupies residues 2458 to 2478; sequence LAVAVAGVMRGNHYALIGIVY. Over 2479–3393 the chain is Cytoplasmic; the sequence is NLWLLKTARR…QRCSAYGELL (915 aa). Positions 2489–2753 constitute an mRNA cap 0-1 NS5-type MT domain; it reads GGSSALTYGE…DLIYPTGTRS (265 aa). Ser-2544 provides a ligand contact to S-adenosyl-L-methionine. Position 2544 is a phosphoserine (Ser-2544). The active-site For 2'-O-MTase activity is the Lys-2549. Residues Gly-2574, Trp-2575, Thr-2592, Leu-2593, Asp-2619, and Ile-2620 each coordinate S-adenosyl-L-methionine. The active-site For 2'-O-MTase activity is the Asp-2634. Ile-2635 contacts S-adenosyl-L-methionine. Catalysis depends on for 2'-O-MTase activity residues Lys-2670 and Glu-2706. Tyr-2708 is a binding site for S-adenosyl-L-methionine. Residues 2860-2893 carry the Nuclear localization signal motif; sequence REIMKVVNQWLFDYLGRTKQPRICTKEEFINKVR. Glu-2927, His-2931, Cys-2936, and Cys-2939 together coordinate Zn(2+). The 153-residue stretch at 3017–3169 folds into the RdRp catalytic domain; that stretch reads GLVYADDTAG…APVDESFAGA (153 aa). Zn(2+)-binding residues include His-3204, Cys-3220, and Cys-3339.

In the N-terminal section; belongs to the class I-like SAM-binding methyltransferase superfamily. mRNA cap 0-1 NS5-type methyltransferase family. As to quaternary structure, homodimer. Interacts (via N-terminus) with host EXOC1 (via C-terminus); this interaction results in EXOC1 degradation through the proteasome degradation pathway. Forms heterodimers with envelope protein E in the endoplasmic reticulum and Golgi. In terms of assembly, homodimer; in the endoplasmic reticulum and Golgi. Interacts with protein prM. Interacts with non-structural protein 1. As to quaternary structure, homodimer; Homohexamer when secreted. Interacts with envelope protein E. Interacts (via N-terminus) with serine protease NS3. In terms of assembly, forms a heterodimer with serine protease NS3. May form homooligomers. As to quaternary structure, forms a heterodimer with NS2B. Interacts with non-structural protein 2A (via N-terminus). Interacts with NS4B. Interacts with unphosphorylated RNA-directed RNA polymerase NS5; this interaction stimulates RNA-directed RNA polymerase NS5 guanylyltransferase activity. NS3 interacts with host PDCD6IP; this interaction contributes to virion release. Interacts with serine protease NS3. In terms of assembly, homodimer. Interacts with host STAT2; this interaction prevents the establishment of cellular antiviral state. Interacts with host TRIM23; this interaction leads to NS5 ubiquitination. Post-translationally, specific enzymatic cleavages in vivo yield mature proteins. The nascent capsid protein C contains a C-terminal hydrophobic domain that act as a signal sequence for translocation of prM into the lumen of the ER. Mature capsid protein C is cleaved at a site upstream of this hydrophobic domain by NS3. prM is cleaved in post-Golgi vesicles by a host furin, releasing the mature small envelope protein M, and peptide pr. Non-structural protein 2A-alpha, a C-terminally truncated form of non-structural protein 2A, results from partial cleavage by NS3. Specific enzymatic cleavages in vivo yield mature proteins peptide 2K acts as a signal sequence and is removed from the N-terminus of NS4B by the host signal peptidase in the ER lumen. Signal cleavage at the 2K-4B site requires a prior NS3 protease-mediated cleavage at the 4A-2K site. Cleaved in post-Golgi vesicles by a host furin, releasing the mature small envelope protein M, and peptide pr. This cleavage is incomplete as up to 30% of viral particles still carry uncleaved prM. In terms of processing, N-glycosylated. Post-translationally, N-glycosylated. The excreted form is glycosylated and this is required for efficient secretion of the protein from infected cells. Polyubiquitinated; ubiquitination is probably mediated by host TRIM23 and is prerequisite for NS5-STAT2 interaction. NS5 is not ISGylated or sumoylated. In terms of processing, phosphorylated on serines residues. This phosphorylation may trigger NS5 nuclear localization.

Its subcellular location is the virion. The protein resides in the host nucleus. It is found in the host cytoplasm. The protein localises to the host perinuclear region. It localises to the secreted. Its subcellular location is the virion membrane. The protein resides in the host endoplasmic reticulum membrane. It carries out the reaction Selective hydrolysis of -Xaa-Xaa-|-Yaa- bonds in which each of the Xaa can be either Arg or Lys and Yaa can be either Ser or Ala.. The enzyme catalyses RNA(n) + a ribonucleoside 5'-triphosphate = RNA(n+1) + diphosphate. It catalyses the reaction a ribonucleoside 5'-triphosphate + H2O = a ribonucleoside 5'-diphosphate + phosphate + H(+). The catalysed reaction is ATP + H2O = ADP + phosphate + H(+). It carries out the reaction a 5'-end (5'-triphosphoguanosine)-ribonucleoside in mRNA + S-adenosyl-L-methionine = a 5'-end (N(7)-methyl 5'-triphosphoguanosine)-ribonucleoside in mRNA + S-adenosyl-L-homocysteine. The enzyme catalyses a 5'-end (N(7)-methyl 5'-triphosphoguanosine)-ribonucleoside in mRNA + S-adenosyl-L-methionine = a 5'-end (N(7)-methyl 5'-triphosphoguanosine)-(2'-O-methyl-ribonucleoside) in mRNA + S-adenosyl-L-homocysteine + H(+). In terms of biological role, plays a role in virus budding by binding to the cell membrane and gathering the viral RNA into a nucleocapsid that forms the core of a mature virus particle. During virus entry, may induce genome penetration into the host cytoplasm after hemifusion induced by the surface proteins. Can migrate to the cell nucleus where it modulates host functions. Inhibits RNA silencing by interfering with host Dicer. Its function is as follows. Prevents premature fusion activity of envelope proteins in trans-Golgi by binding to envelope protein E at pH6.0. After virion release in extracellular space, gets dissociated from E dimers. Functionally, acts as a chaperone for envelope protein E during intracellular virion assembly by masking and inactivating envelope protein E fusion peptide. prM is the only viral peptide matured by host furin in the trans-Golgi network probably to avoid catastrophic activation of the viral fusion activity in acidic Golgi compartment prior to virion release. prM-E cleavage is inefficient, and many virions are only partially matured. These uncleaved prM would play a role in immune evasion. In terms of biological role, may play a role in virus budding. Exerts cytotoxic effects by activating a mitochondrial apoptotic pathway through M ectodomain. May display a viroporin activity. Binds to host cell surface receptor and mediates fusion between viral and cellular membranes. Envelope protein is synthesized in the endoplasmic reticulum in the form of heterodimer with protein prM. They play a role in virion budding in the ER, and the newly formed immature particle is covered with 60 spikes composed of heterodimer between precursor prM and envelope protein E. The virion is transported to the Golgi apparatus where the low pH causes dissociation of PrM-E heterodimers and formation of E homodimers. prM-E cleavage is inefficient, and many virions are only partially matured. These uncleaved prM would play a role in immune evasion. Its function is as follows. Involved in immune evasion, pathogenesis and viral replication. Once cleaved off the polyprotein, is targeted to three destinations: the viral replication cycle, the plasma membrane and the extracellular compartment. Essential for viral replication. Required for formation of the replication complex and recruitment of other non-structural proteins to the ER-derived membrane structures. Excreted as a hexameric lipoparticle that plays a role against host immune response. Antagonizing the complement function. Binds to the host macrophages and dendritic cells. Inhibits signal transduction originating from Toll-like receptor 3 (TLR3). Functionally, component of the viral RNA replication complex that functions in virion assembly and antagonizes the host immune response. In terms of biological role, required cofactor for the serine protease function of NS3. May have membrane-destabilizing activity and form viroporins. Displays three enzymatic activities: serine protease, NTPase and RNA helicase. NS3 serine protease, in association with NS2B, performs its autocleavage and cleaves the polyprotein at dibasic sites in the cytoplasm: C-prM, NS2A-NS2B, NS2B-NS3, NS3-NS4A, NS4A-2K and NS4B-NS5. NS3 RNA helicase binds RNA and unwinds dsRNA in the 3' to 5' direction. Also plays a role in virus assembly. Its function is as follows. Regulates the ATPase activity of the NS3 helicase activity. NS4A allows NS3 helicase to conserve energy during unwinding. Functionally, functions as a signal peptide for NS4B and is required for the interferon antagonism activity of the latter. In terms of biological role, induces the formation of ER-derived membrane vesicles where the viral replication takes place. Inhibits interferon (IFN)-induced host STAT1 phosphorylation and nuclear translocation, thereby preventing the establishment of cellular antiviral state by blocking the IFN-alpha/beta pathway. Replicates the viral (+) and (-) RNA genome, and performs the capping of genomes in the cytoplasm. NS5 methylates viral RNA cap at guanine N-7 and ribose 2'-O positions. Besides its role in RNA genome replication, also prevents the establishment of cellular antiviral state by blocking the interferon-alpha/beta (IFN-alpha/beta) signaling pathway. IFN-I induces binding of NS5 to host IFN-activated transcription factor STAT2, preventing its transcriptional activity. Host TRIM23 is the E3 ligase that interacts with and polyubiquitinates NS5 to promote its binding to STAT2 and trigger IFN-I signaling inhibition. This is Genome polyprotein from Banzi virus (BANV).